The primary structure comprises 163 residues: UPF0134 protein MPN_139 (163 aa).

This sequence belongs to the UPF0134 family.

The sequence is that of UPF0134 protein MPN_139 from Mycoplasma pneumoniae (strain ATCC 29342 / M129 / Subtype 1) (Mycoplasmoides pneumoniae).